We begin with the raw amino-acid sequence, 770 residues long: uncharacterized protein (770 aa).

Positions 736–770 (GSGQPGQSPANVGDDPNRMVQSSASQTQIGHVFNN) are disordered. Over residues 754–770 (MVQSSASQTQIGHVFNN) the composition is skewed to polar residues.

This is an uncharacterized protein from Caenorhabditis elegans.